A 122-amino-acid chain; its full sequence is Protein GL2-INTERACTING REPRESSOR 1 (122 aa).

The span at 1–10 shows a compositional bias: basic and acidic residues; that stretch reads MSRRSPKLEL. Residues 1 to 62 form a disordered region; that stretch reads MSRRSPKLEL…PSVRYSTSPE (62 aa). The EAR signature appears at 7 to 12; that stretch reads KLELKL. Positions 27–46 are enriched in low complexity; it reads SPSRSATTSPTSPPSSCVSS. Polar residues predominate over residues 47–62; it reads EMNQDEPSVRYSTSPE.

In terms of assembly, interacts with GL2. Interacts with TPL. As to expression, expressed in root and shoot meristems.

It localises to the nucleus. Acts as a negative regulator of root hair development redundantly with GIR2. GIR1 and GIR2 may function as adapter proteins that associate with GL2 and participate in the control of root hair formation. GIR1 and GIR2 may function as adapter proteins that associate with TPL and participate in the repression of root gene expression. In Arabidopsis thaliana (Mouse-ear cress), this protein is Protein GL2-INTERACTING REPRESSOR 1.